Reading from the N-terminus, the 33-residue chain is Brevinin-2 (33 aa).

Cysteines 27 and 33 form a disulfide.

This sequence belongs to the frog skin active peptide (FSAP) family. Brevinin subfamily. Expressed by the skin glands.

The protein localises to the secreted. Shows antibacterial activity against representative Gram-negative and Gram-positive bacterial species, and a very high hemolytic activity. The polypeptide is Brevinin-2 (Pelophylax porosus brevipodus (Nagoya Daruma pond frog)).